The primary structure comprises 277 residues: Caspase-3 (277 aa).

Residue Met1 is modified to N-acetylmethionine. 2 propeptides span residues 1–9 and 10–28; these read MENNKTSVD and SKSI…KSMD. The residue at position 11 (Lys11) is an N6-acetyllysine. Phosphoserine is present on Ser26. Active-site residues include His121 and Cys163. S-nitrosocysteine; in inhibited form is present on Cys163.

Belongs to the peptidase C14A family. Heterotetramer that consists of two anti-parallel arranged heterodimers, each one formed by a 17 kDa (p17) and a 12 kDa (p12) subunit. Interacts with BIRC6/bruce. In terms of assembly, (Microbial infection) Subunit p17 interacts with African swine fever virus (ASFV) inhibitor of apoptosis protein. Cleavage by granzyme B, caspase-6, caspase-8 and caspase-10 generates the two active subunits. Additional processing of the propeptides is likely due to the autocatalytic activity of the activated protease. Active heterodimers between the small subunit of caspase-7 protease and the large subunit of caspase-3 also occur and vice versa. In terms of processing, S-nitrosylated on its catalytic site cysteine in unstimulated cell lines and denitrosylated upon activation of the Fas apoptotic pathway, associated with an increase in intracellular caspase activity. Fas therefore activates caspase-3 not only by inducing the cleavage of the caspase zymogen to its active subunits, but also by stimulating the denitrosylation of its active site thiol. Post-translationally, ubiquitinated by BIRC6; this activity is inhibited by DIABLO/SMAC.

The protein localises to the cytoplasm. The enzyme catalyses Strict requirement for an Asp residue at positions P1 and P4. It has a preferred cleavage sequence of Asp-Xaa-Xaa-Asp-|- with a hydrophobic amino-acid residue at P2 and a hydrophilic amino-acid residue at P3, although Val or Ala are also accepted at this position.. Its activity is regulated as follows. Inhibited by BIRC6; following inhibition of BIRC6-caspase binding by DIABLO/SMAC, BIRC6 is subjected to caspase cleavage, leading to an increase in active caspases. Functionally, involved in the activation cascade of caspases responsible for apoptosis execution. At the onset of apoptosis, it proteolytically cleaves poly(ADP-ribose) polymerase PARP1 at a '216-Asp-|-Gly-217' bond. Cleaves and activates sterol regulatory element binding proteins (SREBPs) between the basic helix-loop-helix leucine zipper domain and the membrane attachment domain. Cleaves and activates caspase-6, -7 and -9 (CASP6, CASP7 and CASP9, respectively). Cleaves and inactivates interleukin-18 (IL18). Triggers cell adhesion in sympathetic neurons through RET cleavage. Cleaves IL-1 beta between an Asp and an Ala, releasing the mature cytokine which is involved in a variety of inflammatory processes. Cleaves and inhibits serine/threonine-protein kinase AKT1 in response to oxidative stress. Acts as an inhibitor of type I interferon production during virus-induced apoptosis by mediating cleavage of antiviral proteins CGAS, IRF3 and MAVS, thereby preventing cytokine overproduction. Also involved in pyroptosis by mediating cleavage and activation of gasdermin-E (GSDME). Cleaves XRCC4 and phospholipid scramblase proteins XKR4, XKR8 and XKR9, leading to promote phosphatidylserine exposure on apoptotic cell surface. Cleaves BIRC6 following inhibition of BIRC6-caspase binding by DIABLO/SMAC. This Sus scrofa (Pig) protein is Caspase-3 (CASP3).